The primary structure comprises 351 residues: Protein-glutamate methylesterase/protein-glutamine glutaminase 2 (351 aa).

Positions 5 to 122 (RVICVDDSAL…RDGLLDYSEL (118 aa)) constitute a Response regulatory domain. 4-aspartylphosphate is present on aspartate 56. The CheB-type methylesterase domain occupies 154–341 (LNSSEKLVIL…PLPAMSERIL (188 aa)). Residues serine 166, histidine 192, and aspartate 289 contribute to the active site.

Belongs to the CheB family. Phosphorylated by CheA. Phosphorylation of the N-terminal regulatory domain activates the methylesterase activity.

It is found in the cytoplasm. It carries out the reaction [protein]-L-glutamate 5-O-methyl ester + H2O = L-glutamyl-[protein] + methanol + H(+). The enzyme catalyses L-glutaminyl-[protein] + H2O = L-glutamyl-[protein] + NH4(+). Its function is as follows. Involved in chemotaxis. Part of a chemotaxis signal transduction system that modulates chemotaxis in response to various stimuli. Catalyzes the demethylation of specific methylglutamate residues introduced into the chemoreceptors (methyl-accepting chemotaxis proteins or MCP) by CheR. Also mediates the irreversible deamidation of specific glutamine residues to glutamic acid. In Bordetella avium (strain 197N), this protein is Protein-glutamate methylesterase/protein-glutamine glutaminase 2.